Here is a 176-residue protein sequence, read N- to C-terminus: UBA-like domain-containing protein 1 (176 aa).

Composition is skewed to low complexity over residues 88-105 (ESFHSGGSSGSPMATSAT) and 120-137 (TPSWPTAASPPGGPQHLQ). The tract at residues 88-176 (ESFHSGGSSG…RAHPAMEAER (89 aa)) is disordered. The segment covering 138–150 (PQPPLWTPAPPSP) has biased composition (pro residues). Residues 166-176 (PRAHPAMEAER) are compositionally biased toward basic and acidic residues.

The protein belongs to the UBALD family.

This is UBA-like domain-containing protein 1 (Ubald1) from Rattus norvegicus (Rat).